The following is a 456-amino-acid chain: Bifunctional protein GlmU (456 aa).

A pyrophosphorylase region spans residues 1–229; the sequence is MLNVVILAAG…GWETLGVNSR (229 aa). UDP-N-acetyl-alpha-D-glucosamine-binding positions include 7–10, K21, Q73, 78–79, 103–105, G139, E154, N169, and N227; these read LAAG, GT, and YGD. Mg(2+) is bound at residue D105. N227 provides a ligand contact to Mg(2+). Residues 230–250 are linker; the sequence is VQQAELERRWQQEQARRQLEA. Positions 251 to 456 are N-acetyltransferase; that stretch reads GVTLADPARF…EGWQRPQKKS (206 aa). Residues R333 and K351 each contribute to the UDP-N-acetyl-alpha-D-glucosamine site. H363 serves as the catalytic Proton acceptor. Y366 and N377 together coordinate UDP-N-acetyl-alpha-D-glucosamine. Acetyl-CoA-binding positions include A380, 386 to 387, S405, A423, and R440; that span reads NY.

It in the N-terminal section; belongs to the N-acetylglucosamine-1-phosphate uridyltransferase family. In the C-terminal section; belongs to the transferase hexapeptide repeat family. In terms of assembly, homotrimer. Mg(2+) serves as cofactor.

Its subcellular location is the cytoplasm. The catalysed reaction is alpha-D-glucosamine 1-phosphate + acetyl-CoA = N-acetyl-alpha-D-glucosamine 1-phosphate + CoA + H(+). It carries out the reaction N-acetyl-alpha-D-glucosamine 1-phosphate + UTP + H(+) = UDP-N-acetyl-alpha-D-glucosamine + diphosphate. It participates in nucleotide-sugar biosynthesis; UDP-N-acetyl-alpha-D-glucosamine biosynthesis; N-acetyl-alpha-D-glucosamine 1-phosphate from alpha-D-glucosamine 6-phosphate (route II): step 2/2. It functions in the pathway nucleotide-sugar biosynthesis; UDP-N-acetyl-alpha-D-glucosamine biosynthesis; UDP-N-acetyl-alpha-D-glucosamine from N-acetyl-alpha-D-glucosamine 1-phosphate: step 1/1. Its pathway is bacterial outer membrane biogenesis; LPS lipid A biosynthesis. In terms of biological role, catalyzes the last two sequential reactions in the de novo biosynthetic pathway for UDP-N-acetylglucosamine (UDP-GlcNAc). The C-terminal domain catalyzes the transfer of acetyl group from acetyl coenzyme A to glucosamine-1-phosphate (GlcN-1-P) to produce N-acetylglucosamine-1-phosphate (GlcNAc-1-P), which is converted into UDP-GlcNAc by the transfer of uridine 5-monophosphate (from uridine 5-triphosphate), a reaction catalyzed by the N-terminal domain. This is Bifunctional protein GlmU from Bordetella petrii (strain ATCC BAA-461 / DSM 12804 / CCUG 43448).